The sequence spans 94 residues: Integration host factor subunit beta (94 aa).

It belongs to the bacterial histone-like protein family. Heterodimer of an alpha and a beta chain.

This protein is one of the two subunits of integration host factor, a specific DNA-binding protein that functions in genetic recombination as well as in transcriptional and translational control. This is Integration host factor subunit beta from Azorhizobium caulinodans (strain ATCC 43989 / DSM 5975 / JCM 20966 / LMG 6465 / NBRC 14845 / NCIMB 13405 / ORS 571).